Consider the following 320-residue polypeptide: Ribosomal RNA small subunit methyltransferase H (320 aa).

S-adenosyl-L-methionine is bound by residues Gly-36 to His-38, Asp-56, Phe-82, Asp-103, and Gln-110.

It belongs to the methyltransferase superfamily. RsmH family.

The protein localises to the cytoplasm. It carries out the reaction cytidine(1402) in 16S rRNA + S-adenosyl-L-methionine = N(4)-methylcytidine(1402) in 16S rRNA + S-adenosyl-L-homocysteine + H(+). Its function is as follows. Specifically methylates the N4 position of cytidine in position 1402 (C1402) of 16S rRNA. This Chromobacterium violaceum (strain ATCC 12472 / DSM 30191 / JCM 1249 / CCUG 213 / NBRC 12614 / NCIMB 9131 / NCTC 9757 / MK) protein is Ribosomal RNA small subunit methyltransferase H.